We begin with the raw amino-acid sequence, 250 residues long: MSKLRVAVLGARGRIGSEAVRAVEAADDLELVAALGRGDRLETLTDTGAQAVVELTTPASVMENLDFCLRHGIHAVVGTTGWTDERLAQLNTWLDDSPSTGVLIAPNFSIGAVLTMKFAERAARYFESVEVVELHHPNKVDAPSGTATRTAQLIAAARAEAGSAPQPDATTTALDGARGADVDGVPVHAIRLRGLLAHQEVLLGGEGETLTIRHDSLHHSSFMPGILLGVRRVVTTPGLTFGLEHFLDLN.

Residues 10–15, 78–80, and 105–108 each bind NAD(+); these read GARGRI, GTT, and APNF. The Proton donor/acceptor role is filled by H135. H136 lines the (S)-2,3,4,5-tetrahydrodipicolinate pocket. The active-site Proton donor is K139. Residue 145–146 coordinates (S)-2,3,4,5-tetrahydrodipicolinate; sequence GT. The segment at 158 to 177 is disordered; it reads RAEAGSAPQPDATTTALDGA.

It belongs to the DapB family.

The protein localises to the cytoplasm. The catalysed reaction is (S)-2,3,4,5-tetrahydrodipicolinate + NAD(+) + H2O = (2S,4S)-4-hydroxy-2,3,4,5-tetrahydrodipicolinate + NADH + H(+). The enzyme catalyses (S)-2,3,4,5-tetrahydrodipicolinate + NADP(+) + H2O = (2S,4S)-4-hydroxy-2,3,4,5-tetrahydrodipicolinate + NADPH + H(+). It participates in amino-acid biosynthesis; L-lysine biosynthesis via DAP pathway; (S)-tetrahydrodipicolinate from L-aspartate: step 4/4. Catalyzes the conversion of 4-hydroxy-tetrahydrodipicolinate (HTPA) to tetrahydrodipicolinate. The protein is 4-hydroxy-tetrahydrodipicolinate reductase of Streptomyces griseus subsp. griseus (strain JCM 4626 / CBS 651.72 / NBRC 13350 / KCC S-0626 / ISP 5235).